Reading from the N-terminus, the 616-residue chain is Dihydroxy-acid dehydratase (616 aa).

Mg(2+) is bound at residue aspartate 81. Cysteine 122 contributes to the [2Fe-2S] cluster binding site. 2 residues coordinate Mg(2+): aspartate 123 and lysine 124. Lysine 124 carries the N6-carboxylysine modification. Position 195 (cysteine 195) interacts with [2Fe-2S] cluster. Glutamate 491 lines the Mg(2+) pocket. The active-site Proton acceptor is the serine 517.

The protein belongs to the IlvD/Edd family. Homodimer. Requires [2Fe-2S] cluster as cofactor. Mg(2+) serves as cofactor.

It carries out the reaction (2R)-2,3-dihydroxy-3-methylbutanoate = 3-methyl-2-oxobutanoate + H2O. The enzyme catalyses (2R,3R)-2,3-dihydroxy-3-methylpentanoate = (S)-3-methyl-2-oxopentanoate + H2O. The protein operates within amino-acid biosynthesis; L-isoleucine biosynthesis; L-isoleucine from 2-oxobutanoate: step 3/4. It functions in the pathway amino-acid biosynthesis; L-valine biosynthesis; L-valine from pyruvate: step 3/4. Functionally, functions in the biosynthesis of branched-chain amino acids. Catalyzes the dehydration of (2R,3R)-2,3-dihydroxy-3-methylpentanoate (2,3-dihydroxy-3-methylvalerate) into 2-oxo-3-methylpentanoate (2-oxo-3-methylvalerate) and of (2R)-2,3-dihydroxy-3-methylbutanoate (2,3-dihydroxyisovalerate) into 2-oxo-3-methylbutanoate (2-oxoisovalerate), the penultimate precursor to L-isoleucine and L-valine, respectively. The chain is Dihydroxy-acid dehydratase from Pectobacterium carotovorum subsp. carotovorum (strain PC1).